Here is a 95-residue protein sequence, read N- to C-terminus: Large ribosomal subunit protein uL23 (95 aa).

It belongs to the universal ribosomal protein uL23 family. In terms of assembly, part of the 50S ribosomal subunit. Contacts protein L29, and trigger factor when it is bound to the ribosome.

Its function is as follows. One of the early assembly proteins it binds 23S rRNA. One of the proteins that surrounds the polypeptide exit tunnel on the outside of the ribosome. Forms the main docking site for trigger factor binding to the ribosome. In Desulfotalea psychrophila (strain LSv54 / DSM 12343), this protein is Large ribosomal subunit protein uL23.